Consider the following 172-residue polypeptide: Adenine phosphoribosyltransferase (172 aa).

It belongs to the purine/pyrimidine phosphoribosyltransferase family. As to quaternary structure, homodimer.

It is found in the cytoplasm. It catalyses the reaction AMP + diphosphate = 5-phospho-alpha-D-ribose 1-diphosphate + adenine. Its pathway is purine metabolism; AMP biosynthesis via salvage pathway; AMP from adenine: step 1/1. Its function is as follows. Catalyzes a salvage reaction resulting in the formation of AMP, that is energically less costly than de novo synthesis. The sequence is that of Adenine phosphoribosyltransferase from Prochlorococcus marinus (strain MIT 9303).